The chain runs to 91 residues: Small ribosomal subunit protein bS16c (91 aa).

Belongs to the bacterial ribosomal protein bS16 family.

It localises to the plastid. Its subcellular location is the chloroplast. This chain is Small ribosomal subunit protein bS16c, found in Vitis vinifera (Grape).